A 283-amino-acid chain; its full sequence is MKVLRVRTYIPGFDEILYGGIPERNIVLISGGPGTGKSILGKQFLYNGLVKKDEPGIFVALEEHPVSVIRSFKHFGWDITKYEKEGKFAIVDAFTAGIGSTAQKEKYVVKDVDNVGELSGVLRDAIRNLNAKRVVIDSVSTLYLSKPAMARSIVMQLKRVIAGLGCTAMFISQVSAGERGFGGPGVEHAVDGIVRLDLDEYEGQLYRSVIVWKMRDSKISMVRHPMDITDEGIVIQWDKYLRITNVKAEIQPLPQKEIEEMKKAVEESEEEKESIQEAEIEEE.

In terms of domain architecture, KaiC spans 4-249 (LRVRTYIPGF…YLRITNVKAE (246 aa)). Position 31–38 (31–38 (GGPGTGKS)) interacts with ATP. Residues 261-283 (MKKAVEESEEEKESIQEAEIEEE) form a disordered region. Residues 267–283 (ESEEEKESIQEAEIEEE) show a composition bias toward acidic residues.

Belongs to the UPF0273 family.

The polypeptide is UPF0273 protein STK_18300 (Sulfurisphaera tokodaii (strain DSM 16993 / JCM 10545 / NBRC 100140 / 7) (Sulfolobus tokodaii)).